Reading from the N-terminus, the 276-residue chain is Merozoite surface protein 2 (276 aa).

A signal peptide spans 1-20; the sequence is MKVIKTLSIINFFIFVTFNI. Asparagine 22 and asparagine 36 each carry an N-linked (GlcNAc...) asparagine glycan. The polymorphic region stretch occupies residues 44–202; sequence AESNPSTGAG…EQTESPELQS (159 aa). The tract at residues 44 to 242 is disordered; the sequence is AESNPSTGAG…CTDGNKENCG (199 aa). Residues 51–90 show a composition bias toward gly residues; sequence GAGGSGSAGGSGSAGGSGSAGGSGSAGGSGSAGSGDGNGA. Repeat copies occupy residues 53 to 58, 59 to 64, 65 to 70, 71 to 76, and 77 to 82. The interval 53–82 is 5 X 6 AA tandem repeats of G-G-S-G-S-A; it reads GGSGSAGGSGSAGGSGSAGGSGSAGGSGSA. Residues 91-127 are compositionally biased toward low complexity; the sequence is NPGADAERSPSTPATTTTTTTTNDAEASTSTSSENPN. Composition is skewed to polar residues over residues 143–169, 176–187, and 194–204; these read KPNQANKETQNNSNVQQDSQTKSNVPP, KSPTAQPEQAEN, and QTESPELQSAP. An N-linked (GlcNAc...) asparagine glycan is attached at asparagine 153. The N-linked (GlcNAc...) asparagine glycan is linked to asparagine 225. Over residues 229–238 the composition is skewed to basic and acidic residues; that stretch reads SQKECTDGNK. Cysteine 233 and cysteine 241 form a disulfide bridge. Residue asparagine 250 is glycosylated (N-linked (GlcNAc...) asparagine). A lipid anchor (GPI-anchor amidated asparagine) is attached at asparagine 250. Residues 251–276 constitute a propeptide, removed in mature form; the sequence is SSNIASINKFVVLISATLVLSFAIFI.

It localises to the cell membrane. Its function is as follows. May play a role in the merozoite attachment to the erythrocyte. This Plasmodium falciparum (isolate 7G8) protein is Merozoite surface protein 2.